We begin with the raw amino-acid sequence, 344 residues long: Mitochondrial genome maintenance exonuclease 1 (344 aa).

Active-site residues include aspartate 238, aspartate 251, and lysine 253. A Phosphoserine modification is found at serine 343.

It belongs to the MGME1 family.

Its subcellular location is the mitochondrion. Its function is as follows. Metal-dependent single-stranded DNA (ssDNA) exonuclease involved in mitochondrial genome maintenance. Has preference for 5'-3' exonuclease activity but is also capable of endonuclease activity on linear substrates. Necessary for maintenance of proper 7S DNA levels. Probably involved in mitochondrial DNA (mtDNA) repair, possibly via the processing of displaced DNA containing Okazaki fragments during RNA-primed DNA synthesis on the lagging strand or via processing of DNA flaps during long-patch base excision repair. Specifically binds 5-hydroxymethylcytosine (5hmC)-containing DNA in stem cells. In Homo sapiens (Human), this protein is Mitochondrial genome maintenance exonuclease 1.